Reading from the N-terminus, the 2193-residue chain is Protein sidekick-1 (2193 aa).

Residues 1-23 (MARARPSVAGGGVAAPPERAGPG) show a composition bias toward low complexity. A disordered region spans residues 1–56 (MARARPSVAGGGVAAPPERAGPGRPRRSRTGHHCDPECPGLRAAPRTPGPGAGRRA). Ig-like C2-type domains are found at residues 86 to 168 (PYFK…SEIQ), 173 to 259 (GNFM…SPFI), 275 to 363 (PIIV…AFLS), 368 to 458 (PYFT…LDVT), and 462 to 551 (PAFT…AMLT). Cysteine 108 and cysteine 151 are joined by a disulfide. N-linked (GlcNAc...) asparagine glycosylation is found at asparagine 123, asparagine 253, and asparagine 283. Cystine bridges form between cysteine 297–cysteine 344, cysteine 390–cysteine 440, and cysteine 483–cysteine 535. 3 N-linked (GlcNAc...) asparagine glycosylation sites follow: asparagine 532, asparagine 545, and asparagine 554. Residues 556 to 645 (TSIVHPPEDR…GSDSRTARLE (90 aa)) enclose the Ig-like C2-type 6 domain. Cysteine 577 and cysteine 629 are joined by a disulfide. Fibronectin type-III domains lie at 652-748 (PPQN…LPEE), 753-849 (PPKN…TLQG), 854-952 (PPQN…THED), 956-1050 (AVGH…VPPD), 1054-1153 (APSN…TLQA), 1158-1256 (APTS…TRES), 1261-1358 (APEN…TKDD), 1362-1456 (PPVR…TEKR), 1461-1558 (PPRE…TLQD), 1563-1681 (PPGS…VGEA), 1686-1782 (APQN…THQA), 1786-1881 (PPSF…AGPA), and 1884-1982 (SPGS…SAQA). Asparagine 764, asparagine 803, asparagine 864, asparagine 997, and asparagine 1006 each carry an N-linked (GlcNAc...) asparagine glycan. Residues asparagine 1264 and asparagine 1315 are each glycosylated (N-linked (GlcNAc...) asparagine). Residues asparagine 1636, asparagine 1730, asparagine 1801, and asparagine 1875 are each glycosylated (N-linked (GlcNAc...) asparagine). A helical transmembrane segment spans residues 1992–2012 (FLLVMALSSLLLILLVVFVLV). Topologically, residues 2013 to 2193 (LHGQSKKYKS…APLTGFSSFV (181 aa)) are cytoplasmic. Positions 2057–2080 (STFSKKNGTRSPPRPSPGGLHYSD) are disordered. The short motif at 2187–2193 (TGFSSFV) is the PDZ-binding element.

It belongs to the sidekick family. In terms of assembly, homodimer; mediates homophilic interactions to promote cell adhesion. Interacts (via PDZ-binding motif) with MAGI1, MAGI2, DLG2, DLG3 and DLG4. Does not mediate homophilic interactions. Expressed by non-overlapping subsets of retinal neurons. Sdk1 and Sdk2 are expressed in non-overlapping subsets of interneurons and retinal ganglion cells (RGCs) that form synapses in distinct inner plexiform layer (IPL) sublaminae (at protein level).

The protein localises to the cell membrane. The protein resides in the synapse. Adhesion molecule that promotes lamina-specific synaptic connections in the retina. Expressed in specific subsets of interneurons and retinal ganglion cells (RGCs) and promotes synaptic connectivity via homophilic interactions. The chain is Protein sidekick-1 from Mus musculus (Mouse).